Consider the following 538-residue polypeptide: CTP synthase (538 aa).

Residues 1–269 (MSPRKYVIVT…ARLVERRLFG (269 aa)) are amidoligase domain. Residue Ser15 participates in CTP binding. Ser15 is a UTP binding site. ATP is bound at residue 16-21 (SVGKGL). Tyr56 is an L-glutamine binding site. ATP is bound at residue Asp73. 2 residues coordinate Mg(2+): Asp73 and Glu143. CTP contacts are provided by residues 150–152 (DIE), 190–195 (KTKPVQ), and Lys226. Residues 190–195 (KTKPVQ) and Lys226 contribute to the UTP site. In terms of domain architecture, Glutamine amidotransferase type-1 spans 294 to 538 (KVAMVGKYTK…FVTAVARLRG (245 aa)). Gly358 is a binding site for L-glutamine. The active-site Nucleophile; for glutamine hydrolysis is the Cys385. L-glutamine-binding positions include 386 to 389 (FGMQ), Glu409, and Arg466. Catalysis depends on residues His512 and Glu514.

Belongs to the CTP synthase family. Homotetramer.

It catalyses the reaction UTP + L-glutamine + ATP + H2O = CTP + L-glutamate + ADP + phosphate + 2 H(+). It carries out the reaction L-glutamine + H2O = L-glutamate + NH4(+). The catalysed reaction is UTP + NH4(+) + ATP = CTP + ADP + phosphate + 2 H(+). Its pathway is pyrimidine metabolism; CTP biosynthesis via de novo pathway; CTP from UDP: step 2/2. Its activity is regulated as follows. Allosterically activated by GTP, when glutamine is the substrate; GTP has no effect on the reaction when ammonia is the substrate. The allosteric effector GTP functions by stabilizing the protein conformation that binds the tetrahedral intermediate(s) formed during glutamine hydrolysis. Inhibited by the product CTP, via allosteric rather than competitive inhibition. In terms of biological role, catalyzes the ATP-dependent amination of UTP to CTP with either L-glutamine or ammonia as the source of nitrogen. Regulates intracellular CTP levels through interactions with the four ribonucleotide triphosphates. The polypeptide is CTP synthase (Aeropyrum pernix (strain ATCC 700893 / DSM 11879 / JCM 9820 / NBRC 100138 / K1)).